Reading from the N-terminus, the 101-residue chain is Small ribosomal subunit protein uS10 (101 aa).

It belongs to the universal ribosomal protein uS10 family. In terms of assembly, part of the 30S ribosomal subunit.

Involved in the binding of tRNA to the ribosomes. The chain is Small ribosomal subunit protein uS10 from Saccharopolyspora erythraea (strain ATCC 11635 / DSM 40517 / JCM 4748 / NBRC 13426 / NCIMB 8594 / NRRL 2338).